The chain runs to 149 residues: Calmodulin (149 aa).

Ala2 carries the N-acetylalanine modification. EF-hand domains lie at 8–43 (EQIAEFKEAFSLFDKDGDGCITTKELGTVMRSLGQN), 44–79 (PTEAELQDMISEVDADQNGTIDFPEFLNLMARKMKD), 81–116 (DSEEELKEAFKVFDKDQNGFISAAELRHVMTNLGEK), and 117–149 (LTDEEVDEMIREADIDGDGQVNYEEFVRMMLAK). Positions 21, 23, 25, 27, 32, 57, 59, 61, 63, 68, 94, 96, 98, and 105 each coordinate Ca(2+). Lys116 carries the N6,N6,N6-trimethyllysine modification. Positions 130, 132, 134, 136, and 141 each coordinate Ca(2+).

It belongs to the calmodulin family.

Calmodulin mediates the control of a large number of enzymes, ion channels and other proteins by Ca(2+). Among the enzymes to be stimulated by the calmodulin-Ca(2+) complex are a number of protein kinases and phosphatases. In Solanum lycopersicum (Tomato), this protein is Calmodulin (CALM1).